Here is a 256-residue protein sequence, read N- to C-terminus: MLLVIDIGNTHTVLGLFSGDTLVDHWRVATDARRTADELGFLIRGLLGQARRADGITGVSCCSTVPAALREVRTMSARWFPDAPLVVVEPGIRTGVPVLYDNPREVGADRIVNTLAAFTLHGGPAIVVDFGTSTNFDVVSARGEFLGGVLAPGIDISIDALASRAAQLVKVQVAKPRSVIGKNTVEALQAGIVYGFAAQVDGIVTRIAEQLPSRPVVIATGGLAPVVLDECRTVDVHDPWLTLTGLRLIFERNVPE.

6–13 (DIGNTHTV) contacts ATP. Substrate is bound by residues Tyr100 and 107–110 (GADR). Asp109 functions as the Proton acceptor in the catalytic mechanism. A K(+)-binding site is contributed by Asp129. An ATP-binding site is contributed by Thr132. Residue Thr184 coordinates substrate.

The protein belongs to the type III pantothenate kinase family. As to quaternary structure, homodimer. NH4(+) is required as a cofactor. K(+) serves as cofactor.

It is found in the cytoplasm. It catalyses the reaction (R)-pantothenate + ATP = (R)-4'-phosphopantothenate + ADP + H(+). It functions in the pathway cofactor biosynthesis; coenzyme A biosynthesis; CoA from (R)-pantothenate: step 1/5. Functionally, catalyzes the phosphorylation of pantothenate (Pan), the first step in CoA biosynthesis. This is Type III pantothenate kinase from Acidothermus cellulolyticus (strain ATCC 43068 / DSM 8971 / 11B).